The sequence spans 451 residues: Probable glycine dehydrogenase (decarboxylating) subunit 1 (451 aa).

The protein belongs to the GcvP family. N-terminal subunit subfamily. In terms of assembly, the glycine cleavage system is composed of four proteins: P, T, L and H. In this organism, the P 'protein' is a heterodimer of two subunits.

It carries out the reaction N(6)-[(R)-lipoyl]-L-lysyl-[glycine-cleavage complex H protein] + glycine + H(+) = N(6)-[(R)-S(8)-aminomethyldihydrolipoyl]-L-lysyl-[glycine-cleavage complex H protein] + CO2. The glycine cleavage system catalyzes the degradation of glycine. The P protein binds the alpha-amino group of glycine through its pyridoxal phosphate cofactor; CO(2) is released and the remaining methylamine moiety is then transferred to the lipoamide cofactor of the H protein. The chain is Probable glycine dehydrogenase (decarboxylating) subunit 1 from Thermococcus kodakarensis (strain ATCC BAA-918 / JCM 12380 / KOD1) (Pyrococcus kodakaraensis (strain KOD1)).